A 416-amino-acid chain; its full sequence is MQITILGSGVIGVTTAYYLAKLGHEVTVIDREEGPALETSFANAGQVSPGYASPWAAPGIPLKAAKWLFQKHAPLILRLTTDPVQYRWLLQMLANCTDSRYKINKTRMVRVAEYSRDCLIELRKDTGIEYDQRSQGTLQLFREQYQLDGIGKDIEVLRQDGVPFEVLDRDGCVNVEPALAHAKDKFVGGLRLPNDETGDCFKFTNALAKIAEGLGVKFRFGVNIKSLLMSGGKISGVETSEGIVTAERYVVALGSYTPALIKALGLNAPIYPVKGYSITAPIVDESRAPVSTVLDESYKIAITRLGDRIRVGGMAEVSGFTDDLPAARRATLDLSVTDLFPGGDLKAATFWSGLRPMTPDSTPIIGGTRYDNLFINAGHGTLGWTMACGSGRLLADLISGNKADIRADDLGIARYN.

Residue 3–17 (ITILGSGVIGVTTAY) participates in FAD binding.

Belongs to the DadA oxidoreductase family. FAD is required as a cofactor.

It catalyses the reaction a D-alpha-amino acid + A + H2O = a 2-oxocarboxylate + AH2 + NH4(+). Its pathway is amino-acid degradation; D-alanine degradation; NH(3) and pyruvate from D-alanine: step 1/1. Oxidative deamination of D-amino acids. The sequence is that of D-amino acid dehydrogenase from Brucella abortus (strain S19).